A 372-amino-acid chain; its full sequence is Queuine tRNA-ribosyltransferase (372 aa).

Asp-92 serves as the catalytic Proton acceptor. Residues 92-96 (DSGGY), Asp-146, Gln-188, and Gly-215 contribute to the substrate site. The RNA binding stretch occupies residues 246–252 (GIGSLRE). Residue Asp-265 is the Nucleophile of the active site. Residues 270 to 274 (TRLGR) form an RNA binding; important for wobble base 34 recognition region. Positions 303, 305, 308, and 334 each coordinate Zn(2+).

The protein belongs to the queuine tRNA-ribosyltransferase family. Homodimer. Within each dimer, one monomer is responsible for RNA recognition and catalysis, while the other monomer binds to the replacement base PreQ1. The cofactor is Zn(2+).

The enzyme catalyses 7-aminomethyl-7-carbaguanine + guanosine(34) in tRNA = 7-aminomethyl-7-carbaguanosine(34) in tRNA + guanine. It functions in the pathway tRNA modification; tRNA-queuosine biosynthesis. In terms of biological role, catalyzes the base-exchange of a guanine (G) residue with the queuine precursor 7-aminomethyl-7-deazaguanine (PreQ1) at position 34 (anticodon wobble position) in tRNAs with GU(N) anticodons (tRNA-Asp, -Asn, -His and -Tyr). Catalysis occurs through a double-displacement mechanism. The nucleophile active site attacks the C1' of nucleotide 34 to detach the guanine base from the RNA, forming a covalent enzyme-RNA intermediate. The proton acceptor active site deprotonates the incoming PreQ1, allowing a nucleophilic attack on the C1' of the ribose to form the product. After dissociation, two additional enzymatic reactions on the tRNA convert PreQ1 to queuine (Q), resulting in the hypermodified nucleoside queuosine (7-(((4,5-cis-dihydroxy-2-cyclopenten-1-yl)amino)methyl)-7-deazaguanosine). This is Queuine tRNA-ribosyltransferase from Prochlorococcus marinus (strain MIT 9215).